The sequence spans 293 residues: D-alanine--D-alanine ligase (293 aa).

An ATP-grasp domain is found at 98–291; sequence KIIWEQHSLT…FNKLVTSIIN (194 aa). 124-177 contacts ATP; the sequence is NFPLPWAVKPTLEGSSIGISKVDNQMQLNDALMLAWQYAPYALIEQWIKGDEYT. Mg(2+)-binding residues include D245, E258, and N260.

Belongs to the D-alanine--D-alanine ligase family. The cofactor is Mg(2+). It depends on Mn(2+) as a cofactor.

The protein resides in the cytoplasm. It catalyses the reaction 2 D-alanine + ATP = D-alanyl-D-alanine + ADP + phosphate + H(+). Its pathway is cell wall biogenesis; peptidoglycan biosynthesis. Cell wall formation. This Vesicomyosocius okutanii subsp. Calyptogena okutanii (strain HA) protein is D-alanine--D-alanine ligase.